The sequence spans 705 residues: Ribosomal RNA large subunit methyltransferase K/L (705 aa).

Residues 43–154 enclose the THUMP domain; it reads LMYQSLMWSR…KDTASIALDL (112 aa).

This sequence belongs to the methyltransferase superfamily. RlmKL family.

The protein resides in the cytoplasm. The catalysed reaction is guanosine(2445) in 23S rRNA + S-adenosyl-L-methionine = N(2)-methylguanosine(2445) in 23S rRNA + S-adenosyl-L-homocysteine + H(+). It catalyses the reaction guanosine(2069) in 23S rRNA + S-adenosyl-L-methionine = N(2)-methylguanosine(2069) in 23S rRNA + S-adenosyl-L-homocysteine + H(+). Specifically methylates the guanine in position 2445 (m2G2445) and the guanine in position 2069 (m7G2069) of 23S rRNA. This is Ribosomal RNA large subunit methyltransferase K/L from Erwinia tasmaniensis (strain DSM 17950 / CFBP 7177 / CIP 109463 / NCPPB 4357 / Et1/99).